A 272-amino-acid chain; its full sequence is PHD finger protein ALFIN-LIKE 6 (272 aa).

Residues 1 to 23 (MEGGGGGGGGGGGGGGGGGGGGA) are compositionally biased toward gly residues. 2 disordered regions span residues 1-24 (MEGGGGGGGGGGGGGGGGGGGGAP) and 162-218 (QAKE…DNTL). Positions 168–182 (PNSSSKSNKPSSKVQ) are enriched in low complexity. Residues 183-200 (SKAESRSKSKLSAPKDEE) are compositionally biased toward basic and acidic residues. The span at 201 to 214 (GSGDDEGEEEEDDH) shows a compositional bias: acidic residues. The PHD-type zinc-finger motif lies at 216–268 (NTLCGTCGTNDGKDEFWICCDNCEKWYHGKCVKITPARAEHIKQYKCPDCTNK).

Belongs to the Alfin family.

It is found in the nucleus. In terms of biological role, histone-binding component that specifically recognizes H3 tails trimethylated on 'Lys-4' (H3K4me3), which mark transcription start sites of virtually all active genes. In Oryza sativa subsp. japonica (Rice), this protein is PHD finger protein ALFIN-LIKE 6.